The sequence spans 247 residues: tRNA pseudouridine synthase A (247 aa).

Catalysis depends on Asp52, which acts as the Nucleophile. Tyr113 contributes to the substrate binding site.

The protein belongs to the tRNA pseudouridine synthase TruA family. In terms of assembly, homodimer.

The enzyme catalyses uridine(38/39/40) in tRNA = pseudouridine(38/39/40) in tRNA. Functionally, formation of pseudouridine at positions 38, 39 and 40 in the anticodon stem and loop of transfer RNAs. The protein is tRNA pseudouridine synthase A of Bartonella quintana (strain Toulouse) (Rochalimaea quintana).